The primary structure comprises 319 residues: Peroxidase 13 (319 aa).

The signal sequence occupies residues 1–22; that stretch reads MITIALFLVLLYFHDQLGYSAA. 4 disulfides stabilise this stretch: C33–C111, C66–C71, C117–C315, and C196–C222. H64 (proton acceptor) is an active-site residue. Ca(2+) is bound by residues D65, V68, G70, D72, and S74. P158 provides a ligand contact to substrate. H189 contributes to the heme b binding site. T190 contacts Ca(2+). Ca(2+) is bound by residues D235, S238, and D243. A glycan (N-linked (GlcNAc...) asparagine) is linked at N280.

The protein belongs to the peroxidase family. Classical plant (class III) peroxidase subfamily. Heme b serves as cofactor. Ca(2+) is required as a cofactor.

It is found in the secreted. It carries out the reaction 2 a phenolic donor + H2O2 = 2 a phenolic radical donor + 2 H2O. Removal of H(2)O(2), oxidation of toxic reductants, biosynthesis and degradation of lignin, suberization, auxin catabolism, response to environmental stresses such as wounding, pathogen attack and oxidative stress. These functions might be dependent on each isozyme/isoform in each plant tissue. The chain is Peroxidase 13 (PER13) from Arabidopsis thaliana (Mouse-ear cress).